Consider the following 209-residue polypeptide: Large ribosomal subunit protein uL4 (209 aa).

Residues 46 to 72 (GTSSTKTRSEVRGSSKKPWKQKGTGRA) form a disordered region. Positions 59–72 (SSKKPWKQKGTGRA) are enriched in basic residues.

It belongs to the universal ribosomal protein uL4 family. As to quaternary structure, part of the 50S ribosomal subunit.

One of the primary rRNA binding proteins, this protein initially binds near the 5'-end of the 23S rRNA. It is important during the early stages of 50S assembly. It makes multiple contacts with different domains of the 23S rRNA in the assembled 50S subunit and ribosome. Its function is as follows. Forms part of the polypeptide exit tunnel. In Borreliella burgdorferi (strain ATCC 35210 / DSM 4680 / CIP 102532 / B31) (Borrelia burgdorferi), this protein is Large ribosomal subunit protein uL4.